The chain runs to 264 residues: Ribonuclease HII (264 aa).

One can recognise an RNase H type-2 domain in the interval 33–224 (GPVAGVDEVG…VRRVASGSNT (192 aa)). Positions 39, 40, and 133 each coordinate a divalent metal cation. The segment at 222 to 264 (SNTAEVADGQPDPRDGTAQTGEGRWSKSSHPATMRATGRAQGT) is disordered.

It belongs to the RNase HII family. It depends on Mn(2+) as a cofactor. Mg(2+) serves as cofactor.

Its subcellular location is the cytoplasm. The catalysed reaction is Endonucleolytic cleavage to 5'-phosphomonoester.. Its function is as follows. Endonuclease that specifically degrades the RNA of RNA-DNA hybrids. The sequence is that of Ribonuclease HII from Mycobacterium bovis (strain ATCC BAA-935 / AF2122/97).